The following is a 311-amino-acid chain: Probable mitochondrial phosphate carrier protein (311 aa).

Residues 1–23 (MSTPLIPPAPPKKTLQLYTPQYY) are Mitochondrial intermembrane-facing. Solcar repeat units lie at residues 21–105 (QYYG…FKHK), 118–203 (YRTS…IVEA), and 219–303 (EKIG…FKIM). The helical transmembrane segment at 24-44 (GLCTLGGLLACGTTHSAITPL) threads the bilayer. The Mitochondrial matrix segment spans residues 45-67 (DLIKCRKQVNPNIYPGNIAGFKT). Residues 68 to 88 (ILSKEGLRGLYTGGMPTLIGY) traverse the membrane as a helical segment. Topologically, residues 89-120 (SLQGCGKYGFYELFKHKYSTLVGAQKAHEYRT) are mitochondrial intermembrane. A helical membrane pass occupies residues 121–141 (SIYLAASASAELLADIMLCPM). Residues 142-171 (EAIKVRVQTSNPRFANTTREAWSKIVTNEG) lie on the Mitochondrial matrix side of the membrane. The chain crosses the membrane as a helical span at residues 172 to 192 (FGTLYRGLAPLWFRQIPYTMM). Topologically, residues 193–220 (KFASFERIVEALYTYIGKPKNMYSKAEK) are mitochondrial intermembrane. A helical membrane pass occupies residues 221–241 (IGISFAGGYMAGVLCAIISHP). Residues 242-269 (ADVMVSKLNSNKKAGEGAGAAAARIYKE) are Mitochondrial matrix-facing. The helical transmembrane segment at 270–290 (IGFSGLWNGLGVRIVMIGTLT) threads the bilayer. The Mitochondrial intermembrane segment spans residues 291–311 (GAQWLIYDSFKIMCGFPATGA).

Belongs to the mitochondrial carrier (TC 2.A.29) family.

It localises to the mitochondrion inner membrane. Transport of phosphate groups from the cytosol to the mitochondrial matrix. This is Probable mitochondrial phosphate carrier protein from Schizosaccharomyces pombe (strain 972 / ATCC 24843) (Fission yeast).